The sequence spans 399 residues: tRNA-specific 2-thiouridylase MnmA (399 aa).

ATP is bound by residues 7-14 (AMSGGVDS) and M33. Catalysis depends on C128, which acts as the Nucleophile. An intrachain disulfide couples C128 to C224. Residue G152 participates in ATP binding. The tract at residues 174-176 (KDQ) is interaction with tRNA. C224 serves as the catalytic Cysteine persulfide intermediate. The interval 333-334 (RY) is interaction with tRNA.

The protein belongs to the MnmA/TRMU family.

It localises to the cytoplasm. It carries out the reaction S-sulfanyl-L-cysteinyl-[protein] + uridine(34) in tRNA + AH2 + ATP = 2-thiouridine(34) in tRNA + L-cysteinyl-[protein] + A + AMP + diphosphate + H(+). Catalyzes the 2-thiolation of uridine at the wobble position (U34) of tRNA, leading to the formation of s(2)U34. The protein is tRNA-specific 2-thiouridylase MnmA of Rhodopirellula baltica (strain DSM 10527 / NCIMB 13988 / SH1).